The sequence spans 262 residues: WUSCHEL-related homeobox 11 (262 aa).

Positions 1–11 (MDGGHSPDRHA) are enriched in basic and acidic residues. Disordered stretches follow at residues 1–21 (MDGGHSPDRHAAAAAGEPVRS) and 79–115 (RRRQRQLQAQAQAAAAAASSGSPPTASSGGLAPGHAG). Residues 18-82 (PVRSRWTPKP…NRRSRSRRRQ (65 aa)) constitute a DNA-binding region (homeobox). The span at 84–112 (QLQAQAQAAAAAASSGSPPTASSGGLAPG) shows a compositional bias: low complexity.

It belongs to the WUS homeobox family. In terms of assembly, interacts with ERF3.

It localises to the nucleus. In terms of biological role, transcription factor which may be involved in developmental processes. Promotes the development of crown roots (both initiation and elongation), main components of the fibrous root system, by regulating the expression of genes required for crown root development and hormone-responsive genes involved in cytokinin (e.g. RR1, RR2, RR3 and RR4) and auxin (e.g. IAA5, IAA11, IAA23 and IAA31) signaling. The polypeptide is WUSCHEL-related homeobox 11 (Oryza sativa subsp. indica (Rice)).